The primary structure comprises 375 residues: Fasciculation and elongation protein zeta-2 (375 aa).

The tract at residues 1–42 is disordered; sequence MAADGDWQDFYEFQEPAGSVRDQENCNASPEAGAGAHAGGDS. A phosphoserine mark is found at S130, S171, and S190. Residues 156 to 177 adopt a coiled-coil conformation; it reads TADQVIEEIEEMMQESPDLEDD. Residues 206 to 281 adopt a coiled-coil conformation; sequence ERVKRLSVSE…AKKKKKLKNG (76 aa). The disordered stretch occupies residues 265 to 297; that stretch reads QKEHKETAKKKKKLKNGSSQNGRNERSHMPGTR.

The protein belongs to the zygin family. In terms of assembly, homodimer; disulfide-linked. May form heterodimers with FEZ1. Interacts with synaptotagmin.

Its function is as follows. Involved in axonal outgrowth and fasciculation. This is Fasciculation and elongation protein zeta-2 (Fez2) from Rattus norvegicus (Rat).